We begin with the raw amino-acid sequence, 32 residues long: Calcitonin (32 aa).

The cysteines at positions 1 and 7 are disulfide-linked. Proline amide is present on proline 32.

This sequence belongs to the calcitonin family.

It is found in the secreted. Functionally, calcitonin is a peptide hormone that causes a rapid but short-lived drop in the level of calcium and phosphate in blood by promoting the incorporation of those ions in the bones. Calcitonin function is mediated by the calcitonin receptor/CALCR and the CALCR-RAMP2 (AMYR2) receptor complex. This chain is Calcitonin (CALCA), found in Bos taurus (Bovine).